The following is a 632-amino-acid chain: Epithelial sodium channel subunit alpha (632 aa).

Residues 1 to 49 are Cytoplasmic-facing; the sequence is MTKEEKNEKEALIEFFSSYRELFEFFCSNTTIHGAIRLVCSRRNRMKTA. The chain crosses the membrane as a helical span at residues 50–70; the sequence is FWLVLFLVTFGLMYWQFGLLF. Topologically, residues 71 to 520 are extracellular; that stretch reads GQYFSYPVSI…SQWSLWFGSS (450 aa). 10 disulfide bridges follow: C97–C264, C189–C196, C241–C248, C355–C440, C377–C417, C377–C436, C381–C432, C390–C417, C390–C440, and C392–C406. A helical transmembrane segment spans residues 521-541; it reads VLSVVEMLELVIDFVIIGVMI. Over 542–632 the chain is Cytoplasmic; sequence LLHRYYYKKA…YYEENGGRRN (91 aa). A compositionally biased stretch (low complexity) spans 612–622; the sequence is SRSSSMRSNRS. The segment at 612–632 is disordered; sequence SRSSSMRSNRSYYEENGGRRN. The segment covering 623–632 has biased composition (basic and acidic residues); that stretch reads YYEENGGRRN.

It belongs to the amiloride-sensitive sodium channel (TC 1.A.6) family. SCNN1A subfamily. As to quaternary structure, heterotrimer; containing an alpha/SCNN1A, a beta/SCNN1B and a gamma/SCNN1G subunit. Interacts with shroom1.

The protein resides in the apical cell membrane. It is found in the cell projection. It localises to the cilium. Its subcellular location is the cytoplasmic granule. The protein localises to the cytoplasm. The protein resides in the cytoplasmic vesicle. It is found in the secretory vesicle. It localises to the acrosome. Its subcellular location is the flagellum. The enzyme catalyses Na(+)(in) = Na(+)(out). With respect to regulation, originally identified and characterized by its inhibition by the diuretic drug amiloride. In terms of biological role, this is one of the three pore-forming subunits of the heterotrimeric epithelial sodium channel (ENaC), a critical regulator of sodium balance and fluid homeostasis. ENaC operates in epithelial tissues, where it mediates the electrodiffusion of sodium ions from extracellular fluid through the apical membrane of cells, with water following osmotically. It plays a key role in maintaining sodium homeostasis through electrogenic sodium reabsorption in the kidneys. The polypeptide is Epithelial sodium channel subunit alpha (Xenopus laevis (African clawed frog)).